The sequence spans 195 residues: Small ribosomal subunit protein uS10c (195 aa).

A chloroplast-targeting transit peptide spans 1–59 (MATSSISAALLSPLTLRNASSSSTKQDFSTLSSLNLRRTLTPTLQSGHTLSNSSNFATF).

This sequence belongs to the universal ribosomal protein uS10 family. Component of the chloroplast small ribosomal subunit (SSU). Mature 70S chloroplast ribosomes of higher plants consist of a small (30S) and a large (50S) subunit. The 30S small subunit contains 1 molecule of ribosomal RNA (16S rRNA) and 24 different proteins. The 50S large subunit contains 3 rRNA molecules (23S, 5S and 4.5S rRNA) and 33 different proteins.

The protein resides in the plastid. Its subcellular location is the chloroplast. Component of the chloroplast ribosome (chloro-ribosome), a dedicated translation machinery responsible for the synthesis of chloroplast genome-encoded proteins, including proteins of the transcription and translation machinery and components of the photosynthetic apparatus. This chain is Small ribosomal subunit protein uS10c (RPS10), found in Spinacia oleracea (Spinach).